The sequence spans 63 residues: Arabinogalactan protein 41 (63 aa).

The first 27 residues, 1-27, serve as a signal peptide directing secretion; the sequence is MSGSRLFFGVSTIVSIIFAILLPMAHA. Q28 bears the Pyrrolidone carboxylic acid mark. P32, P34, and P36 each carry 4-hydroxyproline. O-linked (Ara...) hydroxyproline glycans are attached at residues P32, P34, and P36. A lipid anchor (GPI-anchor amidated serine) is attached at S38. The propeptide at 39–63 is removed in mature form; sequence DGTTIDQGIAYVLMLVALVLTYLIH.

Belongs to the AG-peptide AGP family. In terms of processing, contains 4-hydroxyproline; hydroxylated on Pro-32, Pro-34 and Pro-36. O-glycosylated on hydroxyprolines; noncontiguous hydroxylproline residues are glycosylated with arabinogalactan.

It is found in the cell membrane. Proteoglycan that seems to be implicated in diverse developmental roles such as differentiation, cell-cell recognition, embryogenesis and programmed cell death. This is Arabinogalactan protein 41 from Arabidopsis thaliana (Mouse-ear cress).